The sequence spans 306 residues: Protein-L-isoaspartate O-methyltransferase 2 (306 aa).

A disordered region spans residues methionine 1 to glycine 82. Over residues proline 38–proline 48 the composition is skewed to pro residues. The segment covering proline 54–threonine 77 has biased composition (low complexity). Serine 142 is an active-site residue.

It belongs to the methyltransferase superfamily. L-isoaspartyl/D-aspartyl protein methyltransferase family.

It is found in the cytoplasm. The catalysed reaction is [protein]-L-isoaspartate + S-adenosyl-L-methionine = [protein]-L-isoaspartate alpha-methyl ester + S-adenosyl-L-homocysteine. Functionally, catalyzes the methyl esterification of L-isoaspartyl residues in peptides and proteins that result from spontaneous decomposition of normal L-aspartyl and L-asparaginyl residues. It plays a role in the repair and/or degradation of damaged proteins. This Cupriavidus necator (strain ATCC 17699 / DSM 428 / KCTC 22496 / NCIMB 10442 / H16 / Stanier 337) (Ralstonia eutropha) protein is Protein-L-isoaspartate O-methyltransferase 2.